A 179-amino-acid chain; its full sequence is Replication restart protein DnaT (179 aa).

The span at 151 to 168 (SRSSNGGMPQRDINSVSE) shows a compositional bias: polar residues. Residues 151 to 179 (SRSSNGGMPQRDINSVSEPDNHIPPGFRG) are disordered.

This sequence belongs to the DnaT family. Homooligomerizes. Interacts with PriB. Component of the replication restart primosome. Primosome assembly occurs via a 'hand-off' mechanism. PriA binds to replication forks, subsequently PriB then DnaT bind; DnaT then displaces ssDNA to generate the helicase loading substrate.

In terms of biological role, involved in the restart of stalled replication forks, which reloads the replicative helicase on sites other than the origin of replication. Can function in multiple replication restart pathways. Displaces ssDNA from a PriB-ssDNA complex. Probably forms a spiral filament on ssDNA. This is Replication restart protein DnaT from Salmonella schwarzengrund (strain CVM19633).